A 67-amino-acid polypeptide reads, in one-letter code: Small ribosomal subunit protein bS21 (67 aa).

The protein belongs to the bacterial ribosomal protein bS21 family.

The sequence is that of Small ribosomal subunit protein bS21 from Oleidesulfovibrio alaskensis (strain ATCC BAA-1058 / DSM 17464 / G20) (Desulfovibrio alaskensis).